The sequence spans 197 residues: Small ribosomal subunit protein uS10c (197 aa).

A chloroplast-targeting transit peptide spans 1–60 (MATSSLSTIVFSPLALSNSSSFPNKPQVSNLSLHSSLSNLRRTLSHSSPSSSSSSNVRVF). Residues 67–91 (ESQETGPESYVEEGSETSALGIGAD) are disordered.

The protein belongs to the universal ribosomal protein uS10 family. Part of the 30S ribosomal subunit.

The protein resides in the plastid. The protein localises to the chloroplast. This chain is Small ribosomal subunit protein uS10c (RPS10), found in Mesembryanthemum crystallinum (Common ice plant).